The following is a 710-amino-acid chain: Adenylosuccinate synthetase (710 aa).

2 disordered regions span residues 1-51 (MPVR…PVPQ) and 84-111 (DEPPHGSQKSLSVAPYTANASSSSGRSK). Composition is skewed to polar residues over residues 10-27 (YNNSSPGVSNALSPSTTA) and 101-111 (ANASSSSGRSK). Residues 180 to 186 (GDEGKGK) and 210 to 212 (GHT) contribute to the GTP site. The active-site Proton acceptor is the Asp-181. 2 residues coordinate Mg(2+): Asp-181 and Gly-210. IMP-binding positions include 181–184 (DEGK), 208–211 (NAGH), Thr-295, Lys-309, Gln-421, Thr-437, and Lys-567. His-211 (proton donor) is an active-site residue. Residue 563–569 (AVTKKPR) participates in substrate binding. GTP contacts are provided by residues Arg-569 and 697-699 (GNG).

Belongs to the adenylosuccinate synthetase family. In terms of assembly, homodimer. Requires Mg(2+) as cofactor.

It is found in the cytoplasm. It catalyses the reaction IMP + L-aspartate + GTP = N(6)-(1,2-dicarboxyethyl)-AMP + GDP + phosphate + 2 H(+). It functions in the pathway purine metabolism; AMP biosynthesis via de novo pathway; AMP from IMP: step 1/2. Plays an important role in the salvage pathway for purine nucleotide biosynthesis. Catalyzes the first committed step in the biosynthesis of AMP from IMP. The chain is Adenylosuccinate synthetase from Leishmania infantum.